Reading from the N-terminus, the 368-residue chain is MPFQLLQTDGHARLGRLICNQGIVDTPAFMPVGTYGSIKTLTAKEVEASGTQIILSNTFHLWLRPGLDIIKLHGSLHKFMSWNGPIITDSGGFQVFSLSKTRTITRKGVGFKSPIDGHLVFLTPEKSIEIQHDLQSDIVMIFDECISYPNTWDYVKKSVNISLNWAERSRLRFDTLHNSNMLFAIIQGGMYENLRDMSAKELINIGFDGYAIGGLSVGEPKKEMYRILSHICKLIPTNKPRYLMGAGKPEDLLEAVQKGIDMFDCVIPTRNARNGYLFVSDGTIKIRNAQYKKDTSPLDGNCDCYTCQHYSRSYLHHLDCCKEILGVRLNTIHNLRYYQRLMEELRQAIKTKSLQNFIDIFYKRVNRI.

Residue Asp-89 is the Proton acceptor of the active site. Substrate is bound by residues 89 to 93 (DSGGF), Asp-143, Gln-187, and Gly-214. The active-site Nucleophile is the Asp-264. Residues 269 to 273 (TRNAR) are RNA binding; important for wobble base 34 recognition. The Zn(2+) site is built by Cys-302, Cys-304, Cys-307, and His-333.

It belongs to the queuine tRNA-ribosyltransferase family. In terms of assembly, homodimer. Within each dimer, one monomer is responsible for RNA recognition and catalysis, while the other monomer binds to the replacement base PreQ1. Zn(2+) serves as cofactor.

The enzyme catalyses 7-aminomethyl-7-carbaguanine + guanosine(34) in tRNA = 7-aminomethyl-7-carbaguanosine(34) in tRNA + guanine. The protein operates within tRNA modification; tRNA-queuosine biosynthesis. Functionally, catalyzes the base-exchange of a guanine (G) residue with the queuine precursor 7-aminomethyl-7-deazaguanine (PreQ1) at position 34 (anticodon wobble position) in tRNAs with GU(N) anticodons (tRNA-Asp, -Asn, -His and -Tyr). Catalysis occurs through a double-displacement mechanism. The nucleophile active site attacks the C1' of nucleotide 34 to detach the guanine base from the RNA, forming a covalent enzyme-RNA intermediate. The proton acceptor active site deprotonates the incoming PreQ1, allowing a nucleophilic attack on the C1' of the ribose to form the product. After dissociation, two additional enzymatic reactions on the tRNA convert PreQ1 to queuine (Q), resulting in the hypermodified nucleoside queuosine (7-(((4,5-cis-dihydroxy-2-cyclopenten-1-yl)amino)methyl)-7-deazaguanosine). The sequence is that of Queuine tRNA-ribosyltransferase from Blochmanniella pennsylvanica (strain BPEN).